The chain runs to 695 residues: UvrABC system protein B (695 aa).

Residues 25 to 176 (KSISEGHRFQ…NQRDVLRDLA (152 aa)) form the Helicase ATP-binding domain. 38 to 45 (GATGTGKT) is an ATP binding site. Residues 91 to 114 (YYDYYQPEAYVPSTDTYIAKSSSI) carry the Beta-hairpin motif. Positions 454–617 (LLGEIYLRLE…ITPKPIVKKN (164 aa)) constitute a Helicase C-terminal domain. The region spanning 652–687 (PELIGQLELKMKEAAKNLEFEEAAQLRDRIKKLRQR) is the UVR domain.

The protein belongs to the UvrB family. Forms a heterotetramer with UvrA during the search for lesions. Interacts with UvrC in an incision complex.

It is found in the cytoplasm. Functionally, the UvrABC repair system catalyzes the recognition and processing of DNA lesions. A damage recognition complex composed of 2 UvrA and 2 UvrB subunits scans DNA for abnormalities. Upon binding of the UvrA(2)B(2) complex to a putative damaged site, the DNA wraps around one UvrB monomer. DNA wrap is dependent on ATP binding by UvrB and probably causes local melting of the DNA helix, facilitating insertion of UvrB beta-hairpin between the DNA strands. Then UvrB probes one DNA strand for the presence of a lesion. If a lesion is found the UvrA subunits dissociate and the UvrB-DNA preincision complex is formed. This complex is subsequently bound by UvrC and the second UvrB is released. If no lesion is found, the DNA wraps around the other UvrB subunit that will check the other stand for damage. The sequence is that of UvrABC system protein B from Synechococcus sp. (strain JA-2-3B'a(2-13)) (Cyanobacteria bacterium Yellowstone B-Prime).